Here is a 345-residue protein sequence, read N- to C-terminus: Mitochondrial metalloendopeptidase OMA1 (345 aa).

Residues 1 to 67 (MLRNIIRFKG…ILLDKSSRKY (67 aa)) are Mitochondrial matrix-facing. A helical membrane pass occupies residues 68 to 88 (LALLFGGCSLFYYTHLDKAPV). Residues 89 to 345 (SDRSRFIWVS…GNYYKSFFSM (257 aa)) are Mitochondrial intermembrane-facing. Position 203 (His-203) interacts with Zn(2+). Glu-204 is an active-site residue. Residues His-207 and Glu-257 each coordinate Zn(2+). A disulfide bridge links Cys-272 with Cys-332. The segment at 314 to 345 (ENMSKWLPKANEIYEQSDCSSMGNYYKSFFSM) is required for protease activation.

This sequence belongs to the peptidase M48 family. Homooligomer. Requires Zn(2+) as cofactor. Post-translationally, forms a redox-dependent disulfide bond, which plays a structural role and regulates its conformational stability and activity.

The protein localises to the mitochondrion inner membrane. With respect to regulation, protease activity is induced in response to various mitochondrial stress, such as changes in membrane potential, oxidative stress or chronic hyperpolarization, and depends on its C-terminal region. Its function is as follows. Protease that is part of the quality control system in the inner membrane of mitochondria. Activated in response to various mitochondrial stress, leading to the proteolytic cleavage of target proteins, such as OXA1 and COX1. Cleaves and thereby promotes the turnover of mistranslated or misfolded membrane proteins. Cleaves the misfolded multi-pass membrane protein OXA1. Involved in quality control of cytochrome oxidase assembly: mediates the cleavage of COX1 in cells lacking COA2. Required for the stability of the respiratory supercomplexes. Required for TOR signaling. This is Mitochondrial metalloendopeptidase OMA1 from Saccharomyces cerevisiae (strain ATCC 204508 / S288c) (Baker's yeast).